The primary structure comprises 422 residues: uncharacterized protein (422 aa).

The interval Met1 to Ser22 is disordered. The segment covering Lys7–Ser22 has biased composition (low complexity).

This is an uncharacterized protein from Acanthamoeba polyphaga mimivirus (APMV).